Here is a 132-residue protein sequence, read N- to C-terminus: Translation initiation factor 5A (132 aa).

Lys-36 carries the hypusine modification.

It belongs to the eIF-5A family.

It localises to the cytoplasm. Functionally, functions by promoting the formation of the first peptide bond. This Pyrobaculum arsenaticum (strain DSM 13514 / JCM 11321 / PZ6) protein is Translation initiation factor 5A (eIF5A).